Consider the following 419-residue polypeptide: Serine hydroxymethyltransferase (419 aa).

(6S)-5,6,7,8-tetrahydrofolate is bound by residues Leu-121 and 125-127 (GHL). Residue Lys-230 is modified to N6-(pyridoxal phosphate)lysine. 355-357 (SPF) serves as a coordination point for (6S)-5,6,7,8-tetrahydrofolate.

The protein belongs to the SHMT family. In terms of assembly, homodimer. It depends on pyridoxal 5'-phosphate as a cofactor.

Its subcellular location is the cytoplasm. The catalysed reaction is (6R)-5,10-methylene-5,6,7,8-tetrahydrofolate + glycine + H2O = (6S)-5,6,7,8-tetrahydrofolate + L-serine. The protein operates within one-carbon metabolism; tetrahydrofolate interconversion. It functions in the pathway amino-acid biosynthesis; glycine biosynthesis; glycine from L-serine: step 1/1. Catalyzes the reversible interconversion of serine and glycine with tetrahydrofolate (THF) serving as the one-carbon carrier. This reaction serves as the major source of one-carbon groups required for the biosynthesis of purines, thymidylate, methionine, and other important biomolecules. Also exhibits THF-independent aldolase activity toward beta-hydroxyamino acids, producing glycine and aldehydes, via a retro-aldol mechanism. The sequence is that of Serine hydroxymethyltransferase from Streptococcus equi subsp. equi (strain 4047).